Here is a 503-residue protein sequence, read N- to C-terminus: ATP synthase subunit alpha, chloroplastic (503 aa).

170 to 177 (GDRQTGKT) is a binding site for ATP.

The protein belongs to the ATPase alpha/beta chains family. As to quaternary structure, F-type ATPases have 2 components, CF(1) - the catalytic core - and CF(0) - the membrane proton channel. CF(1) has five subunits: alpha(3), beta(3), gamma(1), delta(1), epsilon(1). CF(0) has four main subunits: a, b, b' and c.

It is found in the plastid. The protein localises to the chloroplast thylakoid membrane. The enzyme catalyses ATP + H2O + 4 H(+)(in) = ADP + phosphate + 5 H(+)(out). In terms of biological role, produces ATP from ADP in the presence of a proton gradient across the membrane. The alpha chain is a regulatory subunit. This chain is ATP synthase subunit alpha, chloroplastic, found in Thalassiosira pseudonana (Marine diatom).